A 303-amino-acid chain; its full sequence is Histone deacetylase HDT2 (303 aa).

The span at 100 to 112 (EMDLDSEDEEEEL) shows a compositional bias: acidic residues. Residues 100 to 282 (EMDLDSEDEE…SGGSVPCKSC (183 aa)) form a disordered region. The segment covering 119–133 (ENGKADGKEEQKNQE) has biased composition (basic and acidic residues). Positions 154–203 (DSDDSDEDESDDSDEDDSDDSDEGEGLSPDEGDDDSSDEDDTSDDDEEET) are enriched in acidic residues. Residues 204 to 217 (PTPKKPEAGKKRGA) are compositionally biased toward basic and acidic residues. The C2H2-type zinc finger occupies 277–300 (VPCKSCSKTFNSEMALQAHSKAKH).

Belongs to the histone deacetylase HD2 family. Multimer. Possibly forms a homotrimer with HDT1 and/or HDT3.

The protein localises to the nucleus. It is found in the nucleolus. In terms of biological role, mediates the deacetylation of lysine residues on the N-terminal part of the core histones (H2A, H2B, H3 and H4). Histone deacetylation gives a tag for epigenetic repression and plays an important role in transcriptional regulation, cell cycle progression and developmental events. The protein is Histone deacetylase HDT2 (HDT2) of Zea mays (Maize).